We begin with the raw amino-acid sequence, 285 residues long: Malonyl-[acyl-carrier protein] O-methyltransferase (285 aa).

It belongs to the methyltransferase superfamily.

It carries out the reaction malonyl-[ACP] + S-adenosyl-L-methionine = malonyl-[ACP] methyl ester + S-adenosyl-L-homocysteine. Its pathway is cofactor biosynthesis; biotin biosynthesis. In terms of biological role, converts the free carboxyl group of a malonyl-thioester to its methyl ester by transfer of a methyl group from S-adenosyl-L-methionine (SAM). It allows to synthesize pimeloyl-ACP via the fatty acid synthetic pathway. The chain is Malonyl-[acyl-carrier protein] O-methyltransferase from Bacillus cytotoxicus (strain DSM 22905 / CIP 110041 / 391-98 / NVH 391-98).